Reading from the N-terminus, the 411-residue chain is Branched-chain-amino-acid aminotransferase, cytosolic (411 aa).

Position 247 is an N6-(pyridoxal phosphate)lysine (lysine 247).

Belongs to the class-IV pyridoxal-phosphate-dependent aminotransferase family. Homodimer. Requires pyridoxal 5'-phosphate as cofactor. The N-terminus is blocked. In terms of tissue distribution, brain, low expression in ovary and placenta, but not found in liver, kidney, and skeletal muscle.

It localises to the cytoplasm. It carries out the reaction L-leucine + 2-oxoglutarate = 4-methyl-2-oxopentanoate + L-glutamate. The enzyme catalyses L-isoleucine + 2-oxoglutarate = (S)-3-methyl-2-oxopentanoate + L-glutamate. It catalyses the reaction L-valine + 2-oxoglutarate = 3-methyl-2-oxobutanoate + L-glutamate. Catalyzes the first reaction in the catabolism of the essential branched chain amino acids leucine, isoleucine, and valine. The sequence is that of Branched-chain-amino-acid aminotransferase, cytosolic (Bcat1) from Rattus norvegicus (Rat).